A 141-amino-acid chain; its full sequence is Cystatin-S (141 aa).

An N-terminal signal peptide occupies residues 1 to 27 (MAYLLHAQLFLLTTFILVLNMRLCPVL). A Secondary area of contact motif is present at residues 76-80 (QVVAG). Intrachain disulfides connect cysteine 94–cysteine 104 and cysteine 118–cysteine 138.

Belongs to the cystatin family. As to expression, found in saliva, tears, urine and seminal fluid.

Its subcellular location is the secreted. Its function is as follows. This protein strongly inhibits papain and ficin, partially inhibits stem bromelain and bovine cathepsin C, but does not inhibit porcine cathepsin B or clostripain. Papain is inhibited non-competitively. This chain is Cystatin-S (Cst4), found in Rattus norvegicus (Rat).